Consider the following 233-residue polypeptide: MLALRTSVGLTKNLFTRRLHISPVLLKKKPSHKGKGGPVEDEEIDIVNPSIYVDELVSKFDKSLELYSKELTDKRKGSVNANIFDNLSLKNGALFKEMASTTLKGKGSLLVTVFDPNEVKNIVSAILASGQNLNPERVPTNNQQLKIPLPPPTAESRQNLCKELKTVFEKYKQSPSKNSLGHIRNEVMKKLKSLQKKDESVKKIIQNVEKVHKDYVTKLSEQLKQAEKSVMGQ.

The protein belongs to the RRF family.

The protein localises to the mitochondrion. Its function is as follows. Necessary for protein synthesis in mitochondria. Functions as a ribosome recycling factor in mitochondria. The polypeptide is Ribosome-recycling factor, mitochondrial (RRF1) (Candida glabrata (strain ATCC 2001 / BCRC 20586 / JCM 3761 / NBRC 0622 / NRRL Y-65 / CBS 138) (Yeast)).